The chain runs to 137 residues: Large-conductance mechanosensitive channel (137 aa).

Transmembrane regions (helical) follow at residues 15 to 35, 38 to 58, and 80 to 100; these read IDLA…NSIV, ILMP…MFIQ, and GNFI…FLFV.

The protein belongs to the MscL family. Homopentamer.

The protein resides in the cell inner membrane. In terms of biological role, channel that opens in response to stretch forces in the membrane lipid bilayer. May participate in the regulation of osmotic pressure changes within the cell. This chain is Large-conductance mechanosensitive channel, found in Bartonella quintana (strain Toulouse) (Rochalimaea quintana).